Here is a 935-residue protein sequence, read N- to C-terminus: Isoleucine--tRNA ligase (935 aa).

Positions 58–68 (PYANGSIHVGH) match the 'HIGH' region motif. Glu558 is an L-isoleucyl-5'-AMP binding site. A 'KMSKS' region motif is present at residues 599–603 (KMSKS). Position 602 (Lys602) interacts with ATP. Positions 897, 900, 917, and 920 each coordinate Zn(2+).

This sequence belongs to the class-I aminoacyl-tRNA synthetase family. IleS type 1 subfamily. Monomer. The cofactor is Zn(2+).

The protein resides in the cytoplasm. The enzyme catalyses tRNA(Ile) + L-isoleucine + ATP = L-isoleucyl-tRNA(Ile) + AMP + diphosphate. Catalyzes the attachment of isoleucine to tRNA(Ile). As IleRS can inadvertently accommodate and process structurally similar amino acids such as valine, to avoid such errors it has two additional distinct tRNA(Ile)-dependent editing activities. One activity is designated as 'pretransfer' editing and involves the hydrolysis of activated Val-AMP. The other activity is designated 'posttransfer' editing and involves deacylation of mischarged Val-tRNA(Ile). The chain is Isoleucine--tRNA ligase from Francisella tularensis subsp. tularensis (strain WY96-3418).